The following is a 354-amino-acid chain: Ferrochelatase (354 aa).

2 residues coordinate Fe cation: His204 and Glu306.

Belongs to the ferrochelatase family.

Its subcellular location is the cytoplasm. It catalyses the reaction heme b + 2 H(+) = protoporphyrin IX + Fe(2+). It participates in porphyrin-containing compound metabolism; protoheme biosynthesis; protoheme from protoporphyrin-IX: step 1/1. In terms of biological role, catalyzes the ferrous insertion into protoporphyrin IX. The sequence is that of Ferrochelatase from Coxiella burnetii (strain RSA 493 / Nine Mile phase I).